A 328-amino-acid polypeptide reads, in one-letter code: Phosphate acyltransferase (328 aa).

This sequence belongs to the PlsX family. In terms of assembly, homodimer. Probably interacts with PlsY.

It localises to the cytoplasm. It carries out the reaction a fatty acyl-[ACP] + phosphate = an acyl phosphate + holo-[ACP]. Its pathway is lipid metabolism; phospholipid metabolism. Catalyzes the reversible formation of acyl-phosphate (acyl-PO(4)) from acyl-[acyl-carrier-protein] (acyl-ACP). This enzyme utilizes acyl-ACP as fatty acyl donor, but not acyl-CoA. This chain is Phosphate acyltransferase, found in Staphylococcus aureus (strain MSSA476).